The sequence spans 155 residues: Ribosomal RNA large subunit methyltransferase H (155 aa).

Residues glycine 104 and leucine 123–phenylalanine 128 each bind S-adenosyl-L-methionine.

It belongs to the RNA methyltransferase RlmH family. In terms of assembly, homodimer.

The protein resides in the cytoplasm. The catalysed reaction is pseudouridine(1915) in 23S rRNA + S-adenosyl-L-methionine = N(3)-methylpseudouridine(1915) in 23S rRNA + S-adenosyl-L-homocysteine + H(+). Its function is as follows. Specifically methylates the pseudouridine at position 1915 (m3Psi1915) in 23S rRNA. In Nitratidesulfovibrio vulgaris (strain DSM 19637 / Miyazaki F) (Desulfovibrio vulgaris), this protein is Ribosomal RNA large subunit methyltransferase H.